Reading from the N-terminus, the 172-residue chain is Shikimate kinase (172 aa).

14–19 (GAGKST) provides a ligand contact to ATP. Ser-18 contributes to the Mg(2+) binding site. Asp-36, Arg-60, and Gly-82 together coordinate substrate. Residue Arg-120 coordinates ATP. Residue Arg-139 coordinates substrate. Gln-156 is a binding site for ATP.

This sequence belongs to the shikimate kinase family. As to quaternary structure, monomer. It depends on Mg(2+) as a cofactor.

It is found in the cytoplasm. The catalysed reaction is shikimate + ATP = 3-phosphoshikimate + ADP + H(+). Its pathway is metabolic intermediate biosynthesis; chorismate biosynthesis; chorismate from D-erythrose 4-phosphate and phosphoenolpyruvate: step 5/7. Catalyzes the specific phosphorylation of the 3-hydroxyl group of shikimic acid using ATP as a cosubstrate. This is Shikimate kinase from Vibrio parahaemolyticus serotype O3:K6 (strain RIMD 2210633).